A 173-amino-acid polypeptide reads, in one-letter code: Fimbrial protein PrsE (173 aa).

A signal peptide spans M1 to A24.

Its subcellular location is the secreted. The protein localises to the fimbrium. In terms of biological role, fimbriae (also called pili), polar filaments radiating from the surface of the bacterium to a length of 0.5-1.5 micrometers and numbering 100-300 per cell, enable bacteria to colonize the epithelium of specific host organs. The protein is Fimbrial protein PrsE (prsE) of Escherichia coli.